The chain runs to 492 residues: Glycosyltransferase alg8 (492 aa).

The next 4 membrane-spanning stretches (helical) occupy residues 13-32 (GWLL…PPQV), 47-69 (IGVW…LYVV), 379-401 (LTVA…LLWV), and 421-443 (PAYP…HVFF).

The protein belongs to the glycosyltransferase 2 family.

The protein resides in the cell membrane. It functions in the pathway glycan biosynthesis; alginate biosynthesis. Functionally, possibly a processive enzyme that polymerizes GDP-mannuronic acid. This is Glycosyltransferase alg8 (alg8) from Azotobacter vinelandii.